The following is a 347-amino-acid chain: Glutamyl-Q tRNA(Asp) synthetase (347 aa).

L-glutamate-binding positions include R31–S35 and E67. The short motif at P34 to N44 is the 'HIGH' region element. 4 residues coordinate Zn(2+): C121, C123, Y143, and C147. Positions 203 and 221 each coordinate L-glutamate. Residues R259–S263 carry the 'KMSKS' region motif. Position 262 (K262) interacts with ATP.

This sequence belongs to the class-I aminoacyl-tRNA synthetase family. GluQ subfamily. The cofactor is Zn(2+).

In terms of biological role, catalyzes the tRNA-independent activation of glutamate in presence of ATP and the subsequent transfer of glutamate onto a tRNA(Asp). Glutamate is transferred on the 2-amino-5-(4,5-dihydroxy-2-cyclopenten-1-yl) moiety of the queuosine in the wobble position of the QUC anticodon. The polypeptide is Glutamyl-Q tRNA(Asp) synthetase (Cutibacterium acnes (strain DSM 16379 / KPA171202) (Propionibacterium acnes)).